Here is a 491-residue protein sequence, read N- to C-terminus: Zinc finger and SCAN domain-containing protein 22 (491 aa).

Ser9 is modified (phosphoserine). An SCAN box domain is found at Arg49–Leu131. Disordered regions lie at residues Arg134 to Thr161 and Phe204 to Asp249. Positions Val214–Gly224 are enriched in basic and acidic residues. The span at Ala225 to Lys241 shows a compositional bias: polar residues. 8 consecutive C2H2-type zinc fingers follow at residues Ser268 to His290, Tyr296 to His318, His324 to His346, Tyr352 to His374, Tyr380 to His402, Tyr408 to His430, Tyr436 to His458, and Tyr464 to His486. A Glycyl lysine isopeptide (Lys-Gly) (interchain with G-Cter in SUMO2) cross-link involves residue Lys443.

This sequence belongs to the krueppel C2H2-type zinc-finger protein family.

It localises to the nucleus. In terms of biological role, may be involved in transcriptional regulation. The polypeptide is Zinc finger and SCAN domain-containing protein 22 (ZSCAN22) (Homo sapiens (Human)).